The primary structure comprises 187 residues: Superoxide dismutase [Cu-Zn] (187 aa).

The first 23 residues, 1-23, serve as a signal peptide directing secretion; it reads MMKMKTLLALAISGICAAGVANA. His80, His82, and His105 together coordinate Cu cation. A disulfide bridge connects residues Cys87 and Cys183. Zn(2+)-binding residues include His105, His114, His123, and Asp126. His161 is a binding site for Cu cation.

It belongs to the Cu-Zn superoxide dismutase family. Homodimer. The cofactor is Cu cation. It depends on Zn(2+) as a cofactor.

The protein resides in the periplasm. It catalyses the reaction 2 superoxide + 2 H(+) = H2O2 + O2. Destroys radicals which are normally produced within the cells and which are toxic to biological systems. In terms of biological role, may confer survival advantage by accelerating dismutation of superoxide of environmental origin to hydrogen peroxide, disruptive to the normal mucociliary clearance process in the host. The chain is Superoxide dismutase [Cu-Zn] (sodC) from Haemophilus parainfluenzae.